A 110-amino-acid polypeptide reads, in one-letter code: Small ribosomal subunit protein uS17 (110 aa).

It belongs to the universal ribosomal protein uS17 family. In terms of assembly, part of the 30S ribosomal subunit.

Functionally, one of the primary rRNA binding proteins, it binds specifically to the 5'-end of 16S ribosomal RNA. This chain is Small ribosomal subunit protein uS17, found in Haloquadratum walsbyi (strain DSM 16790 / HBSQ001).